The following is a 95-amino-acid chain: Cliotide T1 (95 aa).

The cyclopeptide (Gly-Asn) cross-link spans 1–30 (GIPCGESCVFIPCITGAIGCSCKSKVCYRN). 3 disulfides stabilise this stretch: C4-C20, C8-C22, and C13-C27. Positions 31–95 (HVIAAEAKTM…KDHLKMSITN (65 aa)) are cleaved as a propeptide — removed in mature form.

Post-translationally, contains 3 disulfide bonds. In terms of processing, this is a cyclic peptide. In terms of tissue distribution, expressed in flower, stem, shoot, root, leaf, seed, pod and nodule (at protein level).

In terms of biological role, probably participates in a plant defense mechanism. Active against Gram-negative bacteria E.coli ATCC 700926 (MIC=1.1 uM), K.pneumoniae ATTC 13883 (MIC=2.7 uM) and P.aeruginosa ATCC 39018 (MIC=4.7 uM). Has hemolytic and cytotoxic activity. The chain is Cliotide T1 from Clitoria ternatea (Butterfly pea).